We begin with the raw amino-acid sequence, 445 residues long: Phosphoglucosamine mutase (445 aa).

Serine 104 acts as the Phosphoserine intermediate in catalysis. Positions 104, 243, 245, and 247 each coordinate Mg(2+). Residue serine 104 is modified to Phosphoserine.

Belongs to the phosphohexose mutase family. Requires Mg(2+) as cofactor. In terms of processing, activated by phosphorylation.

The enzyme catalyses alpha-D-glucosamine 1-phosphate = D-glucosamine 6-phosphate. Catalyzes the conversion of glucosamine-6-phosphate to glucosamine-1-phosphate. This is Phosphoglucosamine mutase from Chromobacterium violaceum (strain ATCC 12472 / DSM 30191 / JCM 1249 / CCUG 213 / NBRC 12614 / NCIMB 9131 / NCTC 9757 / MK).